The chain runs to 149 residues: 3-dehydroquinate dehydratase (149 aa).

Y22 acts as the Proton acceptor in catalysis. 3 residues coordinate substrate: N73, H79, and D86. H99 serves as the catalytic Proton donor. Residues L100 to S101 and R110 contribute to the substrate site.

It belongs to the type-II 3-dehydroquinase family. As to quaternary structure, homododecamer.

The enzyme catalyses 3-dehydroquinate = 3-dehydroshikimate + H2O. Its pathway is metabolic intermediate biosynthesis; chorismate biosynthesis; chorismate from D-erythrose 4-phosphate and phosphoenolpyruvate: step 3/7. Functionally, catalyzes a trans-dehydration via an enolate intermediate. The protein is 3-dehydroquinate dehydratase of Prochlorococcus marinus (strain MIT 9313).